A 288-amino-acid chain; its full sequence is Mortality factor 4-like protein 2 (288 aa).

Residues 1 to 15 show a composition bias toward polar residues; it reads MSSRKQGSQPRGQQS. The tract at residues 1 to 113 is disordered; that stretch reads MSSRKQGSQP…RADPTVESEE (113 aa). Ser71 is subject to Phosphoserine. Residues 117-288 enclose the MRG domain; the sequence is NRMEVKVKIP…ASAEYHRKAL (172 aa).

As to quaternary structure, component of the NuA4 histone acetyltransferase complex which contains the catalytic subunit KAT5/TIP60 and the subunits EP400, TRRAP/PAF400, BRD8/SMAP, EPC1, DMAP1/DNMAP1, RUVBL1/TIP49, RUVBL2, ING3, actin, ACTL6A/BAF53A, MORF4L1/MRG15, MORF4L2/MRGX, MRGBP, YEATS4/GAS41 and VPS72/YL1. The NuA4 complex interacts with MYC and the adenovirus E1A protein. MORF4L1 may also participate in the formation of NuA4 related complexes which lack the KAT5/TIP60 catalytic subunit, but which include the SWI/SNF related protein SRCAP. Component of the MSIN3A histone deacetylase complex, which includes SIN3A, HDAC2, ARID4B, MORF4L1, RBBP4/RbAp48, and RBBP7/RbAp46. Interacts with MRFAP1 and RB1. May also interact with one or more as yet undefined members of the TLE (transducin-like enhancer of split) family of transcriptional repressors.

It localises to the nucleus. Component of the NuA4 histone acetyltransferase complex which is involved in transcriptional activation of select genes principally by acetylation of nucleosomal histone H4 and H2A. This modification may both alter nucleosome - DNA interactions and promote interaction of the modified histones with other proteins which positively regulate transcription. This complex may be required for the activation of transcriptional programs associated with oncogene and proto-oncogene mediated growth induction, tumor suppressor mediated growth arrest and replicative senescence, apoptosis, and DNA repair. The NuA4 complex ATPase and helicase activities seem to be, at least in part, contributed by the association of RUVBL1 and RUVBL2 with EP400. NuA4 may also play a direct role in DNA repair when directly recruited to sites of DNA damage. Also a component of the MSIN3A complex which acts to repress transcription by deacetylation of nucleosomal histones. In Homo sapiens (Human), this protein is Mortality factor 4-like protein 2 (MORF4L2).